Reading from the N-terminus, the 252-residue chain is Flap endonuclease Xni (252 aa).

Aspartate 103 lines the Mg(2+) pocket. The 5'-3' exonuclease domain maps to 159 to 248; sequence VLPEQLPDYW…LKGNLQQLRL (90 aa). K(+)-binding residues include leucine 170, alanine 171, proline 179, isoleucine 181, and isoleucine 184. The tract at residues 183-188 is interaction with DNA; it reads GIGPKT.

It belongs to the Xni family. The cofactor is Mg(2+). It depends on K(+) as a cofactor.

Its function is as follows. Has flap endonuclease activity. During DNA replication, flap endonucleases cleave the 5'-overhanging flap structure that is generated by displacement synthesis when DNA polymerase encounters the 5'-end of a downstream Okazaki fragment. The chain is Flap endonuclease Xni from Photorhabdus laumondii subsp. laumondii (strain DSM 15139 / CIP 105565 / TT01) (Photorhabdus luminescens subsp. laumondii).